The primary structure comprises 476 residues: Ribulose bisphosphate carboxylase large chain (476 aa).

The propeptide occupies 1–2 (MS). Pro3 is modified (N-acetylproline). At Lys14 the chain carries N6,N6,N6-trimethyllysine. Asn123 and Thr173 together coordinate substrate. Lys175 serves as the catalytic Proton acceptor. Lys177 provides a ligand contact to substrate. Mg(2+)-binding residues include Lys201, Asp203, and Glu204. Lys201 carries the N6-carboxylysine modification. Catalysis depends on His294, which acts as the Proton acceptor. Substrate contacts are provided by Arg295, His327, and Ser379.

It belongs to the RuBisCO large chain family. Type I subfamily. As to quaternary structure, heterohexadecamer of 8 large chains and 8 small chains; disulfide-linked. The disulfide link is formed within the large subunit homodimers. Mg(2+) serves as cofactor. In terms of processing, the disulfide bond which can form in the large chain dimeric partners within the hexadecamer appears to be associated with oxidative stress and protein turnover.

The protein resides in the plastid. The protein localises to the chloroplast. The catalysed reaction is 2 (2R)-3-phosphoglycerate + 2 H(+) = D-ribulose 1,5-bisphosphate + CO2 + H2O. It catalyses the reaction D-ribulose 1,5-bisphosphate + O2 = 2-phosphoglycolate + (2R)-3-phosphoglycerate + 2 H(+). In terms of biological role, ruBisCO catalyzes two reactions: the carboxylation of D-ribulose 1,5-bisphosphate, the primary event in carbon dioxide fixation, as well as the oxidative fragmentation of the pentose substrate in the photorespiration process. Both reactions occur simultaneously and in competition at the same active site. This chain is Ribulose bisphosphate carboxylase large chain, found in Sorghum bicolor (Sorghum).